Here is a 610-residue protein sequence, read N- to C-terminus: Nuclear factor 7, ovary (610 aa).

The Tudor-knot domain occupies 21 to 75; that stretch reads NVGSTYPCKRSDGSQHDADIVKTRYNKQAGREEYYVHYVGLNRRQNEWVDKSRLV. The tract at residues 79–127 is disordered; that stretch reads PPKEVETNGTDQEEMTEPTEQPDSKTPQKRKLEEPEPEPKKAKVEDKDA. The residue at position 104 (Thr104) is a Phosphothreonine; by CDK1. A compositionally biased stretch (basic and acidic residues) spans 108 to 127; the sequence is RKLEEPEPEPKKAKVEDKDA. The segment at 146-186 adopts an RING-type zinc-finger fold; it reads CPLCVELFKDPVMVACGHNFCRSCIDKVWEGQSSFACPECK. The segment at 220-261 adopts a B box-type zinc-finger fold; sequence RPLEKCSEHDERLKLYCKDDGTLGCVICRDSLKHASHNFLPI. 4 residues coordinate Zn(2+): Cys225, His228, Cys247, and His253. A coiled-coil region spans residues 295-374; that stretch reads DKIEQHNKNV…AKERMEETDS (80 aa). The 196-residue stretch at 415–610 folds into the B30.2/SPRY domain; the sequence is PIQYIMWKEL…VDALRFVHNQ (196 aa).

Monomer. In terms of tissue distribution, abundant in oocytes. At the neurula stage, low expression in dorsal embryo region including neural folds and somites.

The protein resides in the nucleus. In terms of biological role, transcription factor that determines dorsal-ventral body axis. The sequence is that of Nuclear factor 7, ovary from Xenopus laevis (African clawed frog).